Consider the following 126-residue polypeptide: Large-conductance mechanosensitive channel (126 aa).

Helical transmembrane passes span 14-34 (VIDL…VKSL) and 67-87 (GSFL…FILV).

The protein belongs to the MscL family. As to quaternary structure, homopentamer.

The protein resides in the cell membrane. Functionally, channel that opens in response to stretch forces in the membrane lipid bilayer. May participate in the regulation of osmotic pressure changes within the cell. This Lactiplantibacillus plantarum (strain ATCC BAA-793 / NCIMB 8826 / WCFS1) (Lactobacillus plantarum) protein is Large-conductance mechanosensitive channel.